The primary structure comprises 436 residues: GTPase Der (436 aa).

EngA-type G domains lie at 4–167 (PIVA…GEEE) and 176–351 (IRLS…ENHK). Residues 10 to 17 (GRPNVGKS), 57 to 61 (DTGGI), 119 to 122 (NKVD), 182 to 189 (GRPNVGKS), 229 to 233 (DTAGM), and 294 to 297 (NKWD) each bind GTP. The region spanning 352–436 (KRVQSSTLNE…PIHIIARKRN (85 aa)) is the KH-like domain.

The protein belongs to the TRAFAC class TrmE-Era-EngA-EngB-Septin-like GTPase superfamily. EngA (Der) GTPase family. As to quaternary structure, associates with the 50S ribosomal subunit.

In terms of biological role, GTPase that plays an essential role in the late steps of ribosome biogenesis. The sequence is that of GTPase Der from Staphylococcus aureus (strain USA300).